The following is a 502-amino-acid chain: UDP-N-acetylglucosamine diphosphorylase 2 (502 aa).

A Substrate binding motif is present at residues 130-133 (LSGG). Asparagine 250 provides a ligand contact to substrate. Positions 332–333 (EY) match the Substrate binding motif. Residue lysine 429 participates in substrate binding.

The protein belongs to the UDPGP type 1 family. Monomer. The cofactor is Mg(2+). Mn(2+) is required as a cofactor. As to expression, expressed in root tips, stipules, lateral root primordia, immature anthers and at the branching points of the flowering shoots.

The protein localises to the cytoplasm. It catalyses the reaction N-acetyl-alpha-D-glucosamine 1-phosphate + UTP + H(+) = UDP-N-acetyl-alpha-D-glucosamine + diphosphate. The catalysed reaction is N-acetyl-alpha-D-galactosamine 1-phosphate + UTP + H(+) = UDP-N-acetyl-alpha-D-galactosamine + diphosphate. It carries out the reaction alpha-D-glucose 1-phosphate + UTP + H(+) = UDP-alpha-D-glucose + diphosphate. Its pathway is nucleotide-sugar biosynthesis; UDP-N-acetyl-alpha-D-glucosamine biosynthesis; UDP-N-acetyl-alpha-D-glucosamine from N-acetyl-alpha-D-glucosamine 1-phosphate: step 1/1. Uridylyltransferase involved in the biosynthesis of UDP-glucosamine, an essential precursor for glycoprotein and glycolipid synthesis. Can use UDP-glucosamine, the 4-epimer UDP-galactosamine and UDP-glucose as substrates. Acts redundantly with GLCNAC1PUT1. Required for gametogenesis and embryo development. The chain is UDP-N-acetylglucosamine diphosphorylase 2 (GLCNAC1PUT2) from Arabidopsis thaliana (Mouse-ear cress).